The chain runs to 537 residues: MAKDIKFSEDARRSLLNGVNKLANTVKTTLGPKGRNVVLEQSYGAPTITNDGVTIAKAIELEDHYENIGAKLVAEAASKTNDIAGDGTTTATVLTQAIVQEGMKNVVAGANPVGIRRGIEKATKAAVDQLHKNSHKVSSRDQIAQVASISSASKEIGDLIAEAMEKVGKDGVITIEDSRGIETELSVVEGMQFDRGYLSQYMVTDNDKMEADLENPYILITDKKISNIQDILPMLQEIVQQGRSLLIIADDVTGEALPTLVLNKIRGTFNVVAVKAPGFGDRRKEQLADIAALTGGTVISEDLGLELKDTQLSQLGQARRVTITKDSTTIVDGSGAKEAIQERVDTIRKQIEDTSSDFDKKKLQERLAKLTGGVAVIHVGAATETELKERRYRVEDALNATRAAVDEGYVAGGGTALVNVEEAVKATKGDTDDEQTGINIVARALTAPVRQIAENAGQEGSVVVDHLRKVDPEVGYNAAEDKYVNMIDEGIIDPTQVTRSALQNAASIAGLLLTTEAVVAEIPEDKPEAAPAQPGMM.

Residues Thr29 to Pro32, Asp86 to Thr90, Gly413, Asn477 to Ala479, and Asp493 contribute to the ATP site.

It belongs to the chaperonin (HSP60) family. Forms a cylinder of 14 subunits composed of two heptameric rings stacked back-to-back. Interacts with the co-chaperonin GroES.

It localises to the cytoplasm. The catalysed reaction is ATP + H2O + a folded polypeptide = ADP + phosphate + an unfolded polypeptide.. Functionally, together with its co-chaperonin GroES, plays an essential role in assisting protein folding. The GroEL-GroES system forms a nano-cage that allows encapsulation of the non-native substrate proteins and provides a physical environment optimized to promote and accelerate protein folding. This Lactobacillus delbrueckii subsp. bulgaricus (strain ATCC 11842 / DSM 20081 / BCRC 10696 / JCM 1002 / NBRC 13953 / NCIMB 11778 / NCTC 12712 / WDCM 00102 / Lb 14) protein is Chaperonin GroEL.